The sequence spans 349 residues: Ion-translocating oxidoreductase complex subunit D (349 aa).

A run of 3 helical transmembrane segments spans residues 36-56 (CAFF…VALS), 77-99 (SAML…WMIV), and 124-144 (AMAA…SWIA). Thr185 carries the FMN phosphoryl threonine modification. Transmembrane regions (helical) follow at residues 212 to 232 (GTGV…LVLL), 239 to 259 (WHIS…GFLL), 265 to 285 (ASPL…FIAT), 291 to 311 (ATSP…VYII), and 315 to 335 (GGYP…APFI).

It belongs to the NqrB/RnfD family. As to quaternary structure, the complex is composed of six subunits: RnfA, RnfB, RnfC, RnfD, RnfE and RnfG. It depends on FMN as a cofactor.

The protein resides in the cell inner membrane. Functionally, part of a membrane-bound complex that couples electron transfer with translocation of ions across the membrane. This chain is Ion-translocating oxidoreductase complex subunit D, found in Shewanella sp. (strain ANA-3).